Consider the following 246-residue polypeptide: Transcription factor MYB13 (246 aa).

2 HTH myb-type domains span residues 9–61 (KIGL…INYL) and 62–116 (RPDI…KKRL). 2 consecutive DNA-binding regions (H-T-H motif) follow at residues 37–61 (WRALPKLAGLLRCGKSCRLRWINYL) and 89–112 (WSAIAAKLPGRTDNEIKNVWHTHL).

Expressed in roots and flowers. Expressed in shoot apex, axillary buds, at the basis of flowers and branching points of inflorescences.

The protein localises to the nucleus. Its function is as follows. Plays a regulatory role in meristem function. Functions as component of a regulatory network controlling the establishment and/or development of the shoot system by the regulation of apical meristem function. May play a role in tolerance to boric acid. In Arabidopsis thaliana (Mouse-ear cress), this protein is Transcription factor MYB13.